Here is a 291-residue protein sequence, read N- to C-terminus: Polyamine aminopropyltransferase (291 aa).

The 241-residue stretch at 5-245 (PGPIVLMEPL…YAVNFVLGSL (241 aa)) folds into the PABS domain. S-methyl-5'-thioadenosine is bound at residue Gln-36. Spermidine is bound by residues His-67 and Glu-91. S-methyl-5'-thioadenosine-binding positions include Asp-111 and 143-144 (DG). Asp-164 acts as the Proton acceptor in catalysis.

Belongs to the spermidine/spermine synthase family. As to quaternary structure, homodimer or homotetramer.

The protein resides in the cytoplasm. It carries out the reaction norspermidine + S-adenosyl 3-(methylsulfanyl)propylamine = norspermine + S-methyl-5'-thioadenosine + H(+). It catalyses the reaction S-adenosyl 3-(methylsulfanyl)propylamine + spermidine = thermospermine + S-methyl-5'-thioadenosine + H(+). Its function is as follows. Involved in the biosynthesis of polyamines which are thought to support the growth of thermophilic microorganisms under high-temperature conditions. It seems that long-chain and branched-chain of polyamines effectively stabilize DNA and RNA, respectively. Catalyzes the irreversible transfer of a propylamine group from the amino donor S-adenosylmethioninamine (decarboxy-AdoMet) to norspermidine and 1,3-diaminopropane to yield norspermine, and to spermidine to yield thermospermine. It can also synthesize thermospermine from putrescine (1,4-diaminobutane) and caldopentamine from norspermine with a very low activity. The biosynthesis of caldohexamine and caldoheptamine from caldopentamine has been also observed. This chain is Polyamine aminopropyltransferase, found in Pyrobaculum aerophilum (strain ATCC 51768 / DSM 7523 / JCM 9630 / CIP 104966 / NBRC 100827 / IM2).